Reading from the N-terminus, the 115-residue chain is NADH-ubiquinone oxidoreductase chain 3 (115 aa).

3 helical membrane passes run 4–24, 55–75, and 84–104; these read LLVIAVNTILSLILITVAFWL, FFLVAITFLLFDLEIALLLPI, and INMVLPTALILLTILALGLAY.

The protein belongs to the complex I subunit 3 family. In terms of assembly, core subunit of respiratory chain NADH dehydrogenase (Complex I) which is composed of 45 different subunits. Interacts with TMEM186. Interacts with TMEM242.

It localises to the mitochondrion inner membrane. It catalyses the reaction a ubiquinone + NADH + 5 H(+)(in) = a ubiquinol + NAD(+) + 4 H(+)(out). Functionally, core subunit of the mitochondrial membrane respiratory chain NADH dehydrogenase (Complex I) which catalyzes electron transfer from NADH through the respiratory chain, using ubiquinone as an electron acceptor. Essential for the catalytic activity of complex I. The protein is NADH-ubiquinone oxidoreductase chain 3 of Ochrotomys nuttalli (Golden mouse).